Reading from the N-terminus, the 315-residue chain is Thymidylate synthase (315 aa).

DUMP-binding positions include arginine 22 and 177 to 178 (RR). Residue cysteine 197 is the Nucleophile of the active site. DUMP contacts are provided by residues 217–220 (RSAD), asparagine 228, and 258–260 (HLY). Aspartate 220 is a (6R)-5,10-methylene-5,6,7,8-tetrahydrofolate binding site. (6R)-5,10-methylene-5,6,7,8-tetrahydrofolate is bound at residue alanine 314.

It belongs to the thymidylate synthase family. Bacterial-type ThyA subfamily. As to quaternary structure, homodimer.

It is found in the cytoplasm. It catalyses the reaction dUMP + (6R)-5,10-methylene-5,6,7,8-tetrahydrofolate = 7,8-dihydrofolate + dTMP. Its pathway is pyrimidine metabolism; dTTP biosynthesis. In terms of biological role, catalyzes the reductive methylation of 2'-deoxyuridine-5'-monophosphate (dUMP) to 2'-deoxythymidine-5'-monophosphate (dTMP) while utilizing 5,10-methylenetetrahydrofolate (mTHF) as the methyl donor and reductant in the reaction, yielding dihydrofolate (DHF) as a by-product. This enzymatic reaction provides an intracellular de novo source of dTMP, an essential precursor for DNA biosynthesis. This chain is Thymidylate synthase, found in Enterococcus faecalis (strain ATCC 700802 / V583).